Here is a 126-residue protein sequence, read N- to C-terminus: Protein ApaG (126 aa).

The region spanning 2-126 (SDSRYKVDVS…FRLAVPGSLH (125 aa)) is the ApaG domain.

This chain is Protein ApaG, found in Pseudomonas syringae pv. tomato (strain ATCC BAA-871 / DC3000).